The primary structure comprises 149 residues: Antitoxin HigA1 (149 aa).

Residues 42-96 (LIALRKHCQLSQVEVAKRMGVRQPTVSGFEKEPSDPKLSTLQRYARALDARLRLV) enclose the HTH cro/C1-type domain. Positions 53–72 (QVEVAKRMGVRQPTVSGFEK) form a DNA-binding region, H-T-H motif.

In terms of assembly, interacts with SecB-like chaperone MT2006.

Functionally, antitoxin component of an atypical, type II toxin-antitoxin chaperone (TAC) system. Probably neutralizes the toxic effects of cognate toxin HigB1, which also requires SecB-like chaperone MT2006 (AC Q7D7P7). Autorepresses its operon (higB1-higA1-MT2006). This chain is Antitoxin HigA1, found in Mycobacterium tuberculosis (strain CDC 1551 / Oshkosh).